We begin with the raw amino-acid sequence, 322 residues long: Tetrahydromethanopterin S-methyltransferase subunit H (322 aa).

Belongs to the MtrH family. In terms of assembly, the complex is composed of 8 subunits; MtrA, MtrB, MtrC, MtrD, MtrE, MtrF, MtrG and MtrH.

The catalysed reaction is 5-methyl-5,6,7,8-tetrahydromethanopterin + coenzyme M + 2 Na(+)(in) = 5,6,7,8-tetrahydromethanopterin + methyl-coenzyme M + 2 Na(+)(out). The protein operates within one-carbon metabolism; methanogenesis from CO(2); methyl-coenzyme M from 5,10-methylene-5,6,7,8-tetrahydromethanopterin: step 2/2. In terms of biological role, part of a complex that catalyzes the formation of methyl-coenzyme M and tetrahydromethanopterin from coenzyme M and methyl-tetrahydromethanopterin. This is an energy-conserving, sodium-ion translocating step. MtrH catalyzes the transfer of the methyl group from methyl-tetrahydromethanopterin to the corrinoid prosthetic group of MtrA. The sequence is that of Tetrahydromethanopterin S-methyltransferase subunit H from Methanopyrus kandleri (strain AV19 / DSM 6324 / JCM 9639 / NBRC 100938).